Reading from the N-terminus, the 509-residue chain is Maturase K (509 aa).

This sequence belongs to the intron maturase 2 family. MatK subfamily.

It localises to the plastid. The protein resides in the chloroplast. Usually encoded in the trnK tRNA gene intron. Probably assists in splicing its own and other chloroplast group II introns. In Nicotiana bigelovii (Bigelov's tobacco), this protein is Maturase K.